The primary structure comprises 544 residues: CTP synthase (544 aa).

An amidoligase domain region spans residues methionine 1 to leucine 266. Position 13 (serine 13) interacts with CTP. Serine 13 is a binding site for UTP. ATP-binding positions include serine 14–isoleucine 19 and aspartate 71. Mg(2+)-binding residues include aspartate 71 and glutamate 140. Residues aspartate 147–glutamate 149, lysine 187–glutamine 192, and lysine 223 contribute to the CTP site. UTP contacts are provided by residues lysine 187–glutamine 192 and lysine 223. Residues threonine 291–alanine 543 enclose the Glutamine amidotransferase type-1 domain. Glycine 354 provides a ligand contact to L-glutamine. Residue cysteine 381 is the Nucleophile; for glutamine hydrolysis of the active site. L-glutamine is bound by residues leucine 382 to glutamine 385, glutamate 404, and arginine 471. Residues histidine 516 and glutamate 518 contribute to the active site.

It belongs to the CTP synthase family. In terms of assembly, homotetramer.

It carries out the reaction UTP + L-glutamine + ATP + H2O = CTP + L-glutamate + ADP + phosphate + 2 H(+). The enzyme catalyses L-glutamine + H2O = L-glutamate + NH4(+). The catalysed reaction is UTP + NH4(+) + ATP = CTP + ADP + phosphate + 2 H(+). The protein operates within pyrimidine metabolism; CTP biosynthesis via de novo pathway; CTP from UDP: step 2/2. Its activity is regulated as follows. Allosterically activated by GTP, when glutamine is the substrate; GTP has no effect on the reaction when ammonia is the substrate. The allosteric effector GTP functions by stabilizing the protein conformation that binds the tetrahedral intermediate(s) formed during glutamine hydrolysis. Inhibited by the product CTP, via allosteric rather than competitive inhibition. Its function is as follows. Catalyzes the ATP-dependent amination of UTP to CTP with either L-glutamine or ammonia as the source of nitrogen. Regulates intracellular CTP levels through interactions with the four ribonucleotide triphosphates. The chain is CTP synthase from Psychrobacter arcticus (strain DSM 17307 / VKM B-2377 / 273-4).